Reading from the N-terminus, the 417-residue chain is NADH-quinone oxidoreductase subunit D (417 aa).

It belongs to the complex I 49 kDa subunit family. In terms of assembly, NDH-1 is composed of 14 different subunits. Subunits NuoB, C, D, E, F, and G constitute the peripheral sector of the complex.

It is found in the cell membrane. The catalysed reaction is a quinone + NADH + 5 H(+)(in) = a quinol + NAD(+) + 4 H(+)(out). Its function is as follows. NDH-1 shuttles electrons from NADH, via FMN and iron-sulfur (Fe-S) centers, to quinones in the respiratory chain. The immediate electron acceptor for the enzyme in this species is believed to be ubiquinone. Couples the redox reaction to proton translocation (for every two electrons transferred, four hydrogen ions are translocated across the cytoplasmic membrane), and thus conserves the redox energy in a proton gradient. The polypeptide is NADH-quinone oxidoreductase subunit D (Polynucleobacter asymbioticus (strain DSM 18221 / CIP 109841 / QLW-P1DMWA-1) (Polynucleobacter necessarius subsp. asymbioticus)).